Consider the following 337-residue polypeptide: o-succinylbenzoate synthase (337 aa).

K142 acts as the Proton donor in catalysis. Positions 170, 199, and 222 each coordinate Mg(2+). Residue K248 is the Proton acceptor of the active site.

Belongs to the mandelate racemase/muconate lactonizing enzyme family. MenC type 1 subfamily. The cofactor is a divalent metal cation.

The enzyme catalyses (1R,6R)-6-hydroxy-2-succinyl-cyclohexa-2,4-diene-1-carboxylate = 2-succinylbenzoate + H2O. It functions in the pathway quinol/quinone metabolism; 1,4-dihydroxy-2-naphthoate biosynthesis; 1,4-dihydroxy-2-naphthoate from chorismate: step 4/7. Its pathway is quinol/quinone metabolism; menaquinone biosynthesis. Converts 2-succinyl-6-hydroxy-2,4-cyclohexadiene-1-carboxylate (SHCHC) to 2-succinylbenzoate (OSB). The chain is o-succinylbenzoate synthase from Pasteurella multocida (strain Pm70).